A 389-amino-acid chain; its full sequence is Large envelope protein (389 aa).

Position 1 is an N-acetylmethionine (Met-1). Gly-2 carries the N-myristoyl glycine; by host lipid modification. The tract at residues 2–108 (GQNLSTSNPL…PPLRTTHPQA (107 aa)) is pre-S1. The segment at 2 to 163 (GQNLSTSNPL…SSRIGDPALN (162 aa)) is pre-S. Topologically, residues 2-170 (GQNLSTSNPL…ALNMENITSG (169 aa)) are virion surface; in external conformation. Residues 2 to 242 (GQNLSTSNPL…VGYRWMCLRR (241 aa)) are Intravirion; in internal conformation-facing. 2 disordered regions span residues 76-102 (TLPA…PPLR) and 133-154 (GGSS…LSTS). Positions 85 to 95 (STNRQSGRQPT) are enriched in polar residues. Residues 109–163 (MQWNSTTFHQTLQDPRVRGLYLPAGGSSSGTVNPVPTTASPTLSTSSRIGDPALN) are pre-S2. Residues 142-154 (PVPTTASPTLSTS) show a composition bias toward low complexity. Residues 171 to 191 (FLGPLLVLQAGFFLLTRILTI) traverse the membrane as a helical segment. The Intravirion; in external conformation portion of the chain corresponds to 192–242 (PQSLDSWWTSLSFLGGTTVCLGQNSQSPTSNHSPTSCPPTCVGYRWMCLRR). A helical membrane pass occupies residues 243–263 (FIIFLFILLLCLIFLLVLLDY). Over 264 to 337 (QGMLPVCPLI…WASARFSWLS (74 aa)) the chain is Virion surface. Asn-309 carries N-linked (GlcNAc...) asparagine; by host glycosylation. The chain crosses the membrane as a helical span at residues 338–358 (LLVPFVQWFVGLSPTVWLSVI). The Intravirion portion of the chain corresponds to 359–364 (WMMWYW). Residues 365–387 (GPSLYNTLSPFLPLLPIFFYLWV) form a helical membrane-spanning segment. Residues 388–389 (YI) lie on the Virion surface side of the membrane.

This sequence belongs to the orthohepadnavirus major surface antigen family. In terms of assembly, in its internal form (Li-HBsAg), interacts with the capsid protein and with the isoform S. Interacts with host chaperone CANX. As to quaternary structure, associates with host chaperone CANX through its pre-S2 N glycan; this association may be essential for isoform M proper secretion. Interacts with isoform L. Interacts with the antigens of satellite virus HDV (HDVAgs); this interaction is required for encapsidation of HDV genomic RNA. In terms of processing, isoform M is N-terminally acetylated by host at a ratio of 90%, and N-glycosylated by host at the pre-S2 region. Myristoylated.

It localises to the virion membrane. Its function is as follows. The large envelope protein exists in two topological conformations, one which is termed 'external' or Le-HBsAg and the other 'internal' or Li-HBsAg. In its external conformation the protein attaches the virus to cell receptors and thereby initiating infection. This interaction determines the species specificity and liver tropism. This attachment induces virion internalization predominantly through caveolin-mediated endocytosis. The large envelope protein also assures fusion between virion membrane and endosomal membrane. In its internal conformation the protein plays a role in virion morphogenesis and mediates the contact with the nucleocapsid like a matrix protein. Functionally, the middle envelope protein plays an important role in the budding of the virion. It is involved in the induction of budding in a nucleocapsid independent way. In this process the majority of envelope proteins bud to form subviral lipoprotein particles of 22 nm of diameter that do not contain a nucleocapsid. The protein is Large envelope protein of Homo sapiens (Human).